The primary structure comprises 558 residues: Dihydroxy-acid dehydratase (558 aa).

Cys50 provides a ligand contact to [2Fe-2S] cluster. Residue Asp82 coordinates Mg(2+). Cys123 serves as a coordination point for [2Fe-2S] cluster. 2 residues coordinate Mg(2+): Asp124 and Lys125. Position 125 is an N6-carboxylysine (Lys125). Cys195 contacts [2Fe-2S] cluster. Glu447 is a Mg(2+) binding site. Ser472 serves as the catalytic Proton acceptor.

It belongs to the IlvD/Edd family. As to quaternary structure, homodimer. [2Fe-2S] cluster serves as cofactor. It depends on Mg(2+) as a cofactor.

The enzyme catalyses (2R)-2,3-dihydroxy-3-methylbutanoate = 3-methyl-2-oxobutanoate + H2O. It catalyses the reaction (2R,3R)-2,3-dihydroxy-3-methylpentanoate = (S)-3-methyl-2-oxopentanoate + H2O. The protein operates within amino-acid biosynthesis; L-isoleucine biosynthesis; L-isoleucine from 2-oxobutanoate: step 3/4. Its pathway is amino-acid biosynthesis; L-valine biosynthesis; L-valine from pyruvate: step 3/4. Functions in the biosynthesis of branched-chain amino acids. Catalyzes the dehydration of (2R,3R)-2,3-dihydroxy-3-methylpentanoate (2,3-dihydroxy-3-methylvalerate) into 2-oxo-3-methylpentanoate (2-oxo-3-methylvalerate) and of (2R)-2,3-dihydroxy-3-methylbutanoate (2,3-dihydroxyisovalerate) into 2-oxo-3-methylbutanoate (2-oxoisovalerate), the penultimate precursor to L-isoleucine and L-valine, respectively. The sequence is that of Dihydroxy-acid dehydratase from Saccharolobus islandicus (strain M.16.27) (Sulfolobus islandicus).